A 425-amino-acid polypeptide reads, in one-letter code: Serine--tRNA ligase (425 aa).

228–230 serves as a coordination point for L-serine; that stretch reads TAE. Residue 259 to 261 coordinates ATP; sequence RSE. Glu-282 contacts L-serine. 346 to 349 provides a ligand contact to ATP; sequence EIAS. Position 382 (Ser-382) interacts with L-serine.

This sequence belongs to the class-II aminoacyl-tRNA synthetase family. Type-1 seryl-tRNA synthetase subfamily. Homodimer. The tRNA molecule binds across the dimer.

Its subcellular location is the cytoplasm. The catalysed reaction is tRNA(Ser) + L-serine + ATP = L-seryl-tRNA(Ser) + AMP + diphosphate + H(+). It catalyses the reaction tRNA(Sec) + L-serine + ATP = L-seryl-tRNA(Sec) + AMP + diphosphate + H(+). It functions in the pathway aminoacyl-tRNA biosynthesis; selenocysteinyl-tRNA(Sec) biosynthesis; L-seryl-tRNA(Sec) from L-serine and tRNA(Sec): step 1/1. Functionally, catalyzes the attachment of serine to tRNA(Ser). Is also able to aminoacylate tRNA(Sec) with serine, to form the misacylated tRNA L-seryl-tRNA(Sec), which will be further converted into selenocysteinyl-tRNA(Sec). In Rickettsia africae (strain ESF-5), this protein is Serine--tRNA ligase.